The chain runs to 165 residues: Large ribosomal subunit protein uL10 (165 aa).

Belongs to the universal ribosomal protein uL10 family. Part of the ribosomal stalk of the 50S ribosomal subunit. The N-terminus interacts with L11 and the large rRNA to form the base of the stalk. The C-terminus forms an elongated spine to which L12 dimers bind in a sequential fashion forming a multimeric L10(L12)X complex.

In terms of biological role, forms part of the ribosomal stalk, playing a central role in the interaction of the ribosome with GTP-bound translation factors. This chain is Large ribosomal subunit protein uL10, found in Burkholderia cenocepacia (strain HI2424).